Reading from the N-terminus, the 111-residue chain is WAP four-disulfide core domain protein 12 (111 aa).

The signal sequence occupies residues 1–23 (MGSSSFLVLTVSLALVTLVAAEG). Residues 27–74 (GIEKAGVCPADNVRCFKSDPPQCHTDQDCLGARKCCYLHCGFKCVIPV) enclose the WAP domain. 4 disulfides stabilise this stretch: C34–C62, C41–C66, C49–C61, and C55–C70. The interval 80–111 (GGNKDEDVSGPCPEPGWEAKSPGSSSTGCPQK) is disordered. A compositionally biased stretch (polar residues) spans 101 to 111 (PGSSSTGCPQK).

The protein resides in the secreted. Antibacterial protein. Putative acid-stable proteinase inhibitor. This chain is WAP four-disulfide core domain protein 12 (WFDC12), found in Papio anubis (Olive baboon).